The following is a 580-amino-acid chain: Acyl-coenzyme A synthetase ACSM3, mitochondrial (580 aa).

The N-terminal 21 residues, 1 to 21 (MAMLLRARCFHRLAIPDPRRI), are a transit peptide targeting the mitochondrion. N6-succinyllysine is present on residues lysine 67 and lysine 100. Lysine 151 is subject to N6-acetyllysine. ATP-binding positions include 229 to 237 (TSGTTGPPK), 368 to 373 (EGYGQT), aspartate 455, arginine 470, and lysine 566.

Belongs to the ATP-dependent AMP-binding enzyme family. It depends on Mg(2+) as a cofactor. Mn(2+) is required as a cofactor.

The protein resides in the mitochondrion. It is found in the mitochondrion matrix. The catalysed reaction is a medium-chain fatty acid + ATP + CoA = a medium-chain fatty acyl-CoA + AMP + diphosphate. The enzyme catalyses propanoate + ATP + CoA = propanoyl-CoA + AMP + diphosphate. It catalyses the reaction butanoate + ATP + CoA = butanoyl-CoA + AMP + diphosphate. It carries out the reaction 2-methylpropanoate + ATP + CoA = 2-methylpropanoyl-CoA + AMP + diphosphate. The catalysed reaction is 2-methylbutanoate + ATP + CoA = 2-methylbutanoyl-CoA + AMP + diphosphate. The enzyme catalyses octanoate + ATP + CoA = octanoyl-CoA + AMP + diphosphate. Functionally, catalyzes the activation of fatty acids by CoA to produce an acyl-CoA, the first step in fatty acid metabolism. Capable of activating medium-chain fatty acids with a preference for isobutyrate among fatty acids with 2-6 carbon atoms. This chain is Acyl-coenzyme A synthetase ACSM3, mitochondrial (Acsm3), found in Rattus norvegicus (Rat).